We begin with the raw amino-acid sequence, 133 residues long: Small ribosomal subunit protein uS8 (133 aa).

This sequence belongs to the universal ribosomal protein uS8 family. As to quaternary structure, part of the 30S ribosomal subunit.

Functionally, one of the primary rRNA binding proteins, it binds directly to 16S rRNA central domain where it helps coordinate assembly of the platform of the 30S subunit. In Sulfolobus acidocaldarius (strain ATCC 33909 / DSM 639 / JCM 8929 / NBRC 15157 / NCIMB 11770), this protein is Small ribosomal subunit protein uS8.